A 314-amino-acid chain; its full sequence is Coiled-coil domain-containing protein 92 (314 aa).

Coiled-coil stretches lie at residues methionine 1–threonine 27 and aspartate 59–tyrosine 113. Disordered regions lie at residues leucine 153–leucine 193 and alanine 251–valine 314. The segment covering proline 176 to arginine 186 has biased composition (basic and acidic residues). Phosphoserine is present on serine 192. The segment covering lysine 266–histidine 280 has biased composition (basic residues).

In terms of assembly, interacts with CEP164. Post-translationally, phosphorylated at Ser-192 by TTBK2.

The protein resides in the cytoplasm. Its subcellular location is the cytoskeleton. It is found in the microtubule organizing center. The protein localises to the centrosome. It localises to the centriole. Functionally, interferon-stimulated protein that plays a role in innate immunity. This is Coiled-coil domain-containing protein 92 (Ccdc92) from Mus musculus (Mouse).